A 296-amino-acid polypeptide reads, in one-letter code: Cytidine deaminase (296 aa).

2 consecutive CMP/dCMP-type deaminase domains span residues 52–172 and 191–296; these read TAVE…FGPK and THAD…YFAL. Position 93 to 95 (93 to 95) interacts with substrate; sequence NQE. His-106 is a binding site for Zn(2+). Residue Glu-108 is the Proton donor of the active site. Positions 133 and 136 each coordinate Zn(2+).

Belongs to the cytidine and deoxycytidylate deaminase family. Homodimer. Zn(2+) serves as cofactor.

It carries out the reaction cytidine + H2O + H(+) = uridine + NH4(+). The catalysed reaction is 2'-deoxycytidine + H2O + H(+) = 2'-deoxyuridine + NH4(+). Functionally, this enzyme scavenges exogenous and endogenous cytidine and 2'-deoxycytidine for UMP synthesis. This chain is Cytidine deaminase, found in Actinobacillus succinogenes (strain ATCC 55618 / DSM 22257 / CCUG 43843 / 130Z).